A 239-amino-acid chain; its full sequence is 2,3,4,5-tetrahydropyridine-2,6-dicarboxylate N-acetyltransferase (239 aa).

Belongs to the transferase hexapeptide repeat family. DapH subfamily.

The catalysed reaction is (S)-2,3,4,5-tetrahydrodipicolinate + acetyl-CoA + H2O = L-2-acetamido-6-oxoheptanedioate + CoA. It functions in the pathway amino-acid biosynthesis; L-lysine biosynthesis via DAP pathway; LL-2,6-diaminopimelate from (S)-tetrahydrodipicolinate (acetylase route): step 1/3. Catalyzes the transfer of an acetyl group from acetyl-CoA to tetrahydrodipicolinate. This chain is 2,3,4,5-tetrahydropyridine-2,6-dicarboxylate N-acetyltransferase, found in Staphylococcus saprophyticus subsp. saprophyticus (strain ATCC 15305 / DSM 20229 / NCIMB 8711 / NCTC 7292 / S-41).